The primary structure comprises 175 residues: Large ribosomal subunit protein uL22 (175 aa).

Residues 113 to 175 (VESRPVKDQR…EASETKGGSD (63 aa)) are disordered. A compositionally biased stretch (low complexity) spans 136–154 (KTAGRAPAKKAGASSGATK). Positions 166–175 (EASETKGGSD) are enriched in basic and acidic residues.

It belongs to the universal ribosomal protein uL22 family. Part of the 50S ribosomal subunit.

Its function is as follows. This protein binds specifically to 23S rRNA; its binding is stimulated by other ribosomal proteins, e.g. L4, L17, and L20. It is important during the early stages of 50S assembly. It makes multiple contacts with different domains of the 23S rRNA in the assembled 50S subunit and ribosome. In terms of biological role, the globular domain of the protein is located near the polypeptide exit tunnel on the outside of the subunit, while an extended beta-hairpin is found that lines the wall of the exit tunnel in the center of the 70S ribosome. This is Large ribosomal subunit protein uL22 from Mycobacterium leprae (strain TN).